The primary structure comprises 398 residues: Probable aminomethyltransferase (398 aa).

Belongs to the GcvT family. As to quaternary structure, the glycine cleavage system is composed of four proteins: P, T, L and H.

The enzyme catalyses N(6)-[(R)-S(8)-aminomethyldihydrolipoyl]-L-lysyl-[protein] + (6S)-5,6,7,8-tetrahydrofolate = N(6)-[(R)-dihydrolipoyl]-L-lysyl-[protein] + (6R)-5,10-methylene-5,6,7,8-tetrahydrofolate + NH4(+). In terms of biological role, the glycine cleavage system catalyzes the degradation of glycine. The protein is Probable aminomethyltransferase of Thermococcus kodakarensis (strain ATCC BAA-918 / JCM 12380 / KOD1) (Pyrococcus kodakaraensis (strain KOD1)).